Here is a 236-residue protein sequence, read N- to C-terminus: UPF0173 metal-dependent hydrolase DSY1309 (236 aa).

The protein belongs to the UPF0173 family.

In Desulfitobacterium hafniense (strain Y51), this protein is UPF0173 metal-dependent hydrolase DSY1309.